Here is a 467-residue protein sequence, read N- to C-terminus: ATP synthase subunit beta (467 aa).

152-159 contributes to the ATP binding site; sequence GGAGVGKT.

The protein belongs to the ATPase alpha/beta chains family. In terms of assembly, F-type ATPases have 2 components, CF(1) - the catalytic core - and CF(0) - the membrane proton channel. CF(1) has five subunits: alpha(3), beta(3), gamma(1), delta(1), epsilon(1). CF(0) has three main subunits: a(1), b(2) and c(9-12). The alpha and beta chains form an alternating ring which encloses part of the gamma chain. CF(1) is attached to CF(0) by a central stalk formed by the gamma and epsilon chains, while a peripheral stalk is formed by the delta and b chains.

The protein localises to the cell inner membrane. It carries out the reaction ATP + H2O + 4 H(+)(in) = ADP + phosphate + 5 H(+)(out). Its function is as follows. Produces ATP from ADP in the presence of a proton gradient across the membrane. The catalytic sites are hosted primarily by the beta subunits. This chain is ATP synthase subunit beta, found in Wolinella succinogenes (strain ATCC 29543 / DSM 1740 / CCUG 13145 / JCM 31913 / LMG 7466 / NCTC 11488 / FDC 602W) (Vibrio succinogenes).